Here is a 329-residue protein sequence, read N- to C-terminus: GMP reductase (329 aa).

The active-site Thioimidate intermediate is the C178. Residue V207 to V230 participates in NADP(+) binding.

It belongs to the IMPDH/GMPR family. GuaC type 2 subfamily.

The enzyme catalyses IMP + NH4(+) + NADP(+) = GMP + NADPH + 2 H(+). Its function is as follows. Catalyzes the irreversible NADPH-dependent deamination of GMP to IMP. It functions in the conversion of nucleobase, nucleoside and nucleotide derivatives of G to A nucleotides, and in maintaining the intracellular balance of A and G nucleotides. The protein is GMP reductase of Lactococcus lactis subsp. lactis (strain IL1403) (Streptococcus lactis).